A 197-amino-acid chain; its full sequence is 7-methyl-GTP pyrophosphatase (197 aa).

The Proton acceptor role is filled by aspartate 72.

The protein belongs to the Maf family. YceF subfamily. The cofactor is a divalent metal cation.

It localises to the cytoplasm. It catalyses the reaction N(7)-methyl-GTP + H2O = N(7)-methyl-GMP + diphosphate + H(+). Nucleoside triphosphate pyrophosphatase that hydrolyzes 7-methyl-GTP (m(7)GTP). May have a dual role in cell division arrest and in preventing the incorporation of modified nucleotides into cellular nucleic acids. This is 7-methyl-GTP pyrophosphatase from Bordetella avium (strain 197N).